We begin with the raw amino-acid sequence, 291 residues long: Glycolipid transfer protein domain-containing protein 2 (291 aa).

N-linked (GlcNAc...) asparagine glycosylation is present at Asn-276.

This sequence belongs to the GLTP family.

The sequence is that of Glycolipid transfer protein domain-containing protein 2 (GLTPD2) from Homo sapiens (Human).